Here is a 315-residue protein sequence, read N- to C-terminus: MARLPILLLLISLVYSTPSPQTSKKIGDDATLSCNRNNTNDYVVMSAWYKEPNSIILLAAKSDVLYFDNYTKDKISYDSPYDDLVTTITIKSLTARDAGTYVCAFFMTSPTNDTDKVDYEEYSTELIVNTDSESTIDIILSGSTHSPETSSEKPEDIDNLNCSSVFEIATPEPITDNVEDHTDTVTYTSDSINTVSASSGESTTDETPEPITDKEEDHTVTDTVSYTTVSTSSGIVTTKSTTDDADLYDTYNDNDTVPSTTVGCSTTSISNYKTKDFVEIFGITALIILSAVAIFCITYYIYNKRSRKYKTENKV.

Residues 1 to 16 form the signal peptide; sequence MARLPILLLLISLVYS. The region spanning 17 to 121 is the Ig-like V-type domain; it reads TPSPQTSKKI…NDTDKVDYEE (105 aa). Topologically, residues 17-279 are virion surface; it reads TPSPQTSKKI…SNYKTKDFVE (263 aa). Residues Cys-34 and Cys-103 are joined by a disulfide bond. Asn-37, Asn-69, Asn-112, and Asn-161 each carry an N-linked (GlcNAc...) asparagine; by host glycan. A compositionally biased stretch (polar residues) spans 192-202; the sequence is INTVSASSGES. Residues 192–214 are disordered; it reads INTVSASSGESTTDETPEPITDK. N-linked (GlcNAc...) asparagine; by host glycosylation is present at Asn-254. The chain crosses the membrane as a helical span at residues 280–303; the sequence is IFGITALIILSAVAIFCITYYIYN. Residues 304 to 315 lie on the Intravirion side of the membrane; that stretch reads KRSRKYKTENKV.

Belongs to the orthopoxvirus OPG185 family. As to quaternary structure, heterodimerizes with OPG040. The heterodimer OPG185-OPG040 interacts with components of the entry fusion complex OPG143 and OPG094. Heterodimer with C3/VPC protein; disulfide-linked. Post-translationally, glycosylated; contains phosphate and sulfate-substituted glycans. O-glycosylation is required for hemagglutination and hemadsorption activities of infected cell membranes.

Its subcellular location is the virion membrane. The protein localises to the host membrane. Prevents cell to cell fusion by interacting with and directing the viral OPG040 protein on the host plasma membrane. The OPG185-OPG040 complex associates with components of the entry fusion complex (EFC) presumably to avoid superinfection and syncytium formation. Via its interaction with C3/VCP protein, protects the infected cell and probably also the extracellular enveloped virus from complement attack. The protein is Protein OPG185 (OPG185) of Vaccinia virus (strain Tian Tan) (VACV).